The following is a 77-amino-acid chain: Translation initiation factor IF-1, chloroplastic (77 aa).

In terms of domain architecture, S1-like spans 1–71 (MKEQKWIHEG…TRGRIIYRLR (71 aa)).

The protein belongs to the IF-1 family. In terms of assembly, component of the 30S ribosomal translation pre-initiation complex which assembles on the 30S ribosome in the order IF-2 and IF-3, IF-1 and N-formylmethionyl-tRNA(fMet); mRNA recruitment can occur at any time during PIC assembly.

Its subcellular location is the plastid. The protein resides in the chloroplast. In terms of biological role, one of the essential components for the initiation of protein synthesis. Stabilizes the binding of IF-2 and IF-3 on the 30S subunit to which N-formylmethionyl-tRNA(fMet) subsequently binds. Helps modulate mRNA selection, yielding the 30S pre-initiation complex (PIC). Upon addition of the 50S ribosomal subunit IF-1, IF-2 and IF-3 are released leaving the mature 70S translation initiation complex. The polypeptide is Translation initiation factor IF-1, chloroplastic (Lactuca sativa (Garden lettuce)).